Consider the following 455-residue polypeptide: UDP-glycosyltransferase 75B2 (455 aa).

His-16 functions as the Proton acceptor in the catalytic mechanism. His-16 contributes to the an anthocyanidin binding site. 7 residues coordinate UDP-alpha-D-glucose: Gln-337, His-352, Trp-355, Ser-357, Glu-360, Asp-376, and Gln-377.

This sequence belongs to the UDP-glycosyltransferase family.

The catalysed reaction is (indol-3-yl)acetate + UDP-alpha-D-glucose = 1-O-(indol-3-ylacetyl)-beta-D-glucose + UDP. The protein operates within plant hormone metabolism; auxin conjugation. Its function is as follows. Possesses low catalytic activity in vitro. Also active as glucosyltransferase in vitro on benzoates and benzoate derivatives. The polypeptide is UDP-glycosyltransferase 75B2 (UGT75B2) (Arabidopsis thaliana (Mouse-ear cress)).